We begin with the raw amino-acid sequence, 259 residues long: Glucosamine-6-phosphate deaminase (259 aa).

Catalysis depends on aspartate 66, which acts as the Proton acceptor; for enolization step. The active-site For ring-opening step is aspartate 135. The Proton acceptor; for ring-opening step role is filled by histidine 137. Glutamate 142 functions as the For ring-opening step in the catalytic mechanism.

Belongs to the glucosamine/galactosamine-6-phosphate isomerase family. NagB subfamily.

The catalysed reaction is alpha-D-glucosamine 6-phosphate + H2O = beta-D-fructose 6-phosphate + NH4(+). The protein operates within amino-sugar metabolism; N-acetylneuraminate degradation; D-fructose 6-phosphate from N-acetylneuraminate: step 5/5. Functionally, catalyzes the reversible isomerization-deamination of glucosamine 6-phosphate (GlcN6P) to form fructose 6-phosphate (Fru6P) and ammonium ion. This is Glucosamine-6-phosphate deaminase from Pseudarthrobacter chlorophenolicus (strain ATCC 700700 / DSM 12829 / CIP 107037 / JCM 12360 / KCTC 9906 / NCIMB 13794 / A6) (Arthrobacter chlorophenolicus).